The sequence spans 497 residues: Pseudooxynicotine dehydrogenase (497 aa).

A signal peptide (tat-type signal) is located at residues 1–43 (MANDKGDISKDGVSRRKFLGGAVIGAAAAAGVGSQILSLSATA). FAD-binding residues include Ala70, Glu89, Arg97, Trp114, Val286, Ser462, and Ile472.

The protein belongs to the flavin monoamine oxidase family. In terms of assembly, homodimer. FAD is required as a cofactor. Post-translationally, predicted to be exported by the Tat system. The position of the signal peptide cleavage has not been experimentally proven.

The protein resides in the periplasm. It catalyses the reaction pseudooxynicotine + 2 Fe(III)-[cytochrome c] + H2O = 4-oxo-4-(pyridin-3-yl)butanal + methylamine + 2 Fe(II)-[cytochrome c] + 2 H(+). It functions in the pathway alkaloid degradation; nicotine degradation. With respect to regulation, strongly inhibited by Ag(+), Co(2+), Cu(2+) and Hg(2+). Functionally, involved in nicotine degradation. Catalyzes the deamination of pseudooxynicotine to 3-succinoylsemialdehyde-pyridine. This chain is Pseudooxynicotine dehydrogenase, found in Pseudomonas sp.